A 307-amino-acid polypeptide reads, in one-letter code: Aspartate carbamoyltransferase catalytic subunit (307 aa).

Arg54 and Thr55 together coordinate carbamoyl phosphate. Lys83 serves as a coordination point for L-aspartate. Carbamoyl phosphate-binding residues include Arg104, His132, and Gln135. L-aspartate contacts are provided by Arg165 and Arg228. Residues Leu267 and Pro268 each contribute to the carbamoyl phosphate site.

It belongs to the aspartate/ornithine carbamoyltransferase superfamily. ATCase family. In terms of assembly, heterododecamer (2C3:3R2) of six catalytic PyrB chains organized as two trimers (C3), and six regulatory PyrI chains organized as three dimers (R2).

The enzyme catalyses carbamoyl phosphate + L-aspartate = N-carbamoyl-L-aspartate + phosphate + H(+). It participates in pyrimidine metabolism; UMP biosynthesis via de novo pathway; (S)-dihydroorotate from bicarbonate: step 2/3. In terms of biological role, catalyzes the condensation of carbamoyl phosphate and aspartate to form carbamoyl aspartate and inorganic phosphate, the committed step in the de novo pyrimidine nucleotide biosynthesis pathway. This is Aspartate carbamoyltransferase catalytic subunit from Clostridium botulinum (strain Alaska E43 / Type E3).